The primary structure comprises 477 residues: Glycogen synthase (477 aa).

K15 serves as a coordination point for ADP-alpha-D-glucose.

Belongs to the glycosyltransferase 1 family. Bacterial/plant glycogen synthase subfamily.

The catalysed reaction is [(1-&gt;4)-alpha-D-glucosyl](n) + ADP-alpha-D-glucose = [(1-&gt;4)-alpha-D-glucosyl](n+1) + ADP + H(+). The protein operates within glycan biosynthesis; glycogen biosynthesis. Its function is as follows. Synthesizes alpha-1,4-glucan chains using ADP-glucose. The polypeptide is Glycogen synthase (Halorhodospira halophila (strain DSM 244 / SL1) (Ectothiorhodospira halophila (strain DSM 244 / SL1))).